Consider the following 373-residue polypeptide: SH3 domain-binding protein 5-like (373 aa).

The interval 1-36 (MEGKEGPPCEVRLPTPGAEREGPVHPELGAFGESAS) is disordered. Coiled coils occupy residues 35–98 (ASDA…ESAR) and 170–258 (WQEM…KLRY). 2 disordered regions span residues 274-308 (ARRTQSSVLSQRAPPLGAEAPPSVKDGETGPPADT) and 332-373 (DLTD…SVSL). The span at 332–360 (DLTDVTSLDGRETGAVESGGSRERGEDRG) shows a compositional bias: basic and acidic residues.

The protein belongs to the SH3BP5 family.

Functionally, functions as a guanine nucleotide exchange factor (GEF) for rab11a. The protein is SH3 domain-binding protein 5-like (sh3bp5l) of Xenopus laevis (African clawed frog).